The sequence spans 1429 residues: DNA-directed RNA polymerase subunit beta' (1429 aa).

Residues C68, C70, C83, and C86 each coordinate Zn(2+). Mg(2+) contacts are provided by D459, D461, and D463. Zn(2+)-binding residues include C805, C879, C886, and C889. The tract at residues 1407–1429 is disordered; it reads ESFPLLGGDGEPASTTSSTTEGE. Polar residues predominate over residues 1419-1429; that stretch reads ASTTSSTTEGE.

Belongs to the RNA polymerase beta' chain family. As to quaternary structure, the RNAP catalytic core consists of 2 alpha, 1 beta, 1 beta' and 1 omega subunit. When a sigma factor is associated with the core the holoenzyme is formed, which can initiate transcription. The cofactor is Mg(2+). It depends on Zn(2+) as a cofactor.

It catalyses the reaction RNA(n) + a ribonucleoside 5'-triphosphate = RNA(n+1) + diphosphate. In terms of biological role, DNA-dependent RNA polymerase catalyzes the transcription of DNA into RNA using the four ribonucleoside triphosphates as substrates. This is DNA-directed RNA polymerase subunit beta' from Rhodopirellula baltica (strain DSM 10527 / NCIMB 13988 / SH1).